The following is a 576-amino-acid chain: Arginine--tRNA ligase (576 aa).

The 'HIGH' region motif lies at 121–131 (PNLAKEMHVGH).

The protein belongs to the class-I aminoacyl-tRNA synthetase family. As to quaternary structure, monomer.

It is found in the cytoplasm. The catalysed reaction is tRNA(Arg) + L-arginine + ATP = L-arginyl-tRNA(Arg) + AMP + diphosphate. In Alteromonas mediterranea (strain DSM 17117 / CIP 110805 / LMG 28347 / Deep ecotype), this protein is Arginine--tRNA ligase.